The chain runs to 218 residues: MDTDFWLQRWQDGQTGFHQDEVMPLLQKHWPALQLPAHARVLVPLCGKTLDLHWLAAQGHRVLGVEISPLAVTQFFDDAGLQPQRHTSRAGEHCIAGPIEIICGDAFTLDASVLGDCTAVYDRAALVALPAALRQRYLETVYARLPAGCRGLLITLDYPQAEKAGPPFSVDAAEVHALFGTQWKVQELEHRDILDQEPRFRADGVTALSTGVYRLQRD.

The S-adenosyl-L-methionine site is built by tryptophan 10, leucine 45, glutamate 66, and arginine 123.

This sequence belongs to the class I-like SAM-binding methyltransferase superfamily. TPMT family.

Its subcellular location is the cytoplasm. The enzyme catalyses S-adenosyl-L-methionine + a thiopurine = S-adenosyl-L-homocysteine + a thiopurine S-methylether.. In Xanthomonas campestris pv. campestris (strain 8004), this protein is Thiopurine S-methyltransferase.